The following is a 92-amino-acid chain: MKLRKVLTGSVLSLGLLVSASPAFATSPSAMVKENNIVQDEISVKELHTKYIYHHNINDFKNIEKDENGRNWYLKGIEYKDGWYVGKYQANY.

A signal peptide spans 1–25 (MKLRKVLTGSVLSLGLLVSASPAFA).

This chain is SPbeta prophage-derived uncharacterized protein YoqM (yoqM), found in Bacillus subtilis (strain 168).